A 1098-amino-acid polypeptide reads, in one-letter code: Probable arabinosyltransferase B (1098 aa).

12 helical membrane passes run 28–50 (WVAT…LPVV), 217–239 (LKLL…LWRL), 271–293 (ASWR…WHVI), 402–419 (LRPE…YVLI), 434–456 (AVVT…AALV), 472–494 (LVGT…TVVF), 541–558 (FGFL…FIML), 570–587 (PAWR…FLMF), 597–619 (GLFA…PSVL), 626–648 (MAFL…GWWY), 663–685 (IDGI…YAAW), and 698–720 (LIRA…VFVA).

The protein belongs to the emb family.

It is found in the cell membrane. Functionally, arabinosyl transferase responsible for the polymerization of arabinose into the arabinan of arabinogalactan. This chain is Probable arabinosyltransferase B (embB), found in Mycobacterium tuberculosis (strain CDC 1551 / Oshkosh).